Consider the following 97-residue polypeptide: Small ribosomal subunit protein bS20 (97 aa).

Over residues 76–85 the composition is skewed to basic residues; it reads RNNGARKKAG. Residues 76 to 97 are disordered; that stretch reads RNNGARKKAGLAKALQKVSQAS. Low complexity predominate over residues 86-97; the sequence is LAKALQKVSQAS.

Belongs to the bacterial ribosomal protein bS20 family.

Functionally, binds directly to 16S ribosomal RNA. This chain is Small ribosomal subunit protein bS20, found in Microcystis aeruginosa (strain NIES-843 / IAM M-2473).